A 156-amino-acid polypeptide reads, in one-letter code: Snaclec A12 (156 aa).

Residues 1-23 (MGRSISVSFGLLVVFLSLSGTGA) form the signal peptide. Intrachain disulfides connect Cys27-Cys38, Cys55-Cys148, and Cys123-Cys140. The region spanning 34–149 (YEGHCYKVFN…CELAYHFICM (116 aa)) is the C-type lectin domain.

The protein belongs to the snaclec family. Heterodimer; disulfide-linked. In terms of tissue distribution, expressed by the venom gland.

The protein resides in the secreted. Its function is as follows. Interferes with one step of hemostasis (modulation of platelet aggregation, or coagulation cascade, for example). The chain is Snaclec A12 from Macrovipera lebetinus (Levantine viper).